Reading from the N-terminus, the 285-residue chain is Probable enoyl-CoA hydratase echA12 (285 aa).

It belongs to the enoyl-CoA hydratase/isomerase family.

It catalyses the reaction a (3S)-3-hydroxyacyl-CoA = a (2E)-enoyl-CoA + H2O. It carries out the reaction a 4-saturated-(3S)-3-hydroxyacyl-CoA = a (3E)-enoyl-CoA + H2O. Functionally, could possibly oxidize fatty acids using specific components. The polypeptide is Probable enoyl-CoA hydratase echA12 (echA12) (Mycobacterium bovis (strain ATCC BAA-935 / AF2122/97)).